The primary structure comprises 157 residues: uncharacterized protein (157 aa).

Residues 9–154 (LLINYKTLDE…ETNLNAVTNE (146 aa)) form the N-acetyltransferase domain.

This is an uncharacterized protein from Bacillus cereus (strain B4264).